A 212-amino-acid chain; its full sequence is RING-H2 finger protein ATL68 (212 aa).

The helical transmembrane segment at leucine 24 to isoleucine 44 threads the bilayer. Residues cysteine 136 to arginine 178 form an RING-type; atypical zinc finger. The interval leucine 182–arginine 212 is disordered. Low complexity predominate over residues proline 185 to serine 195.

The protein belongs to the RING-type zinc finger family. ATL subfamily.

It localises to the membrane. The catalysed reaction is S-ubiquitinyl-[E2 ubiquitin-conjugating enzyme]-L-cysteine + [acceptor protein]-L-lysine = [E2 ubiquitin-conjugating enzyme]-L-cysteine + N(6)-ubiquitinyl-[acceptor protein]-L-lysine.. It participates in protein modification; protein ubiquitination. This chain is RING-H2 finger protein ATL68 (ATL68), found in Arabidopsis thaliana (Mouse-ear cress).